A 373-amino-acid chain; its full sequence is tRNA-specific 2-thiouridylase MnmA (373 aa).

Residues 12-19 and methionine 38 each bind ATP; that span reads GMSGGVDS. The interval 98 to 100 is interaction with target base in tRNA; the sequence is NPD. Cysteine 103 serves as the catalytic Nucleophile. The cysteines at positions 103 and 200 are disulfide-linked. An ATP-binding site is contributed by glycine 127. Positions 150–152 are interaction with tRNA; it reads KDQ. The active-site Cysteine persulfide intermediate is cysteine 200. Residues 312–313 are interaction with tRNA; that stretch reads RY.

This sequence belongs to the MnmA/TRMU family.

It localises to the cytoplasm. The enzyme catalyses S-sulfanyl-L-cysteinyl-[protein] + uridine(34) in tRNA + AH2 + ATP = 2-thiouridine(34) in tRNA + L-cysteinyl-[protein] + A + AMP + diphosphate + H(+). Functionally, catalyzes the 2-thiolation of uridine at the wobble position (U34) of tRNA, leading to the formation of s(2)U34. This Streptococcus thermophilus (strain ATCC BAA-491 / LMD-9) protein is tRNA-specific 2-thiouridylase MnmA.